We begin with the raw amino-acid sequence, 561 residues long: Carbohydrate sulfotransferase 15 (561 aa).

The Cytoplasmic portion of the chain corresponds to 1–80 (MRHCINCCIQ…FLRFKKGKRC (80 aa)). A helical; Signal-anchor for type II membrane protein membrane pass occupies residues 81 to 101 (SLVFGLIIMTLVMASYILSGA). Residues 102–561 (HQELLISSPF…ADEAFAWKTT (460 aa)) lie on the Lumenal side of the membrane. Position 263–267 (263–267 (KCGTT)) interacts with 3'-phosphoadenylyl sulfate. An N-linked (GlcNAc...) asparagine glycan is attached at Asn364. Arg392 and Ser400 together coordinate 3'-phosphoadenylyl sulfate.

This sequence belongs to the sulfotransferase 1 family. As to quaternary structure, homodimer; disulfide-linked (Potential). The relevance of homodimerization is however unsure. May interact with phosphorylated proteins in resting B-cells, including HCK. The cofactor is a divalent metal cation. Glutathione is required as a cofactor. Post-translationally, glycosylated. In terms of tissue distribution, expressed in B-cell-enriched tissues but not in fetal or adult thymus. Expressed in fetal and adult spleen, lymph node, tonsil, bone marrow and peripheral leukocytes. Not expressed in T-cells. In pro-B, pre-B, and mature B-cell lines, it colocalizes with RAG1.

Its subcellular location is the golgi apparatus membrane. It catalyses the reaction dermatan 4'-sulfate + n 3'-phosphoadenylyl sulfate = dermatan 4',6'-bissulfate + n adenosine 3',5'-bisphosphate + n H(+). The catalysed reaction is chondroitin 4'-sulfate + n 3'-phosphoadenylyl sulfate = chondroitin 4',6'-bissulfate + n adenosine 3',5'-bisphosphate + n H(+). Its activity is regulated as follows. Inhibited by phenyl beta-GalNAc(4,6-SO(4)). In terms of biological role, sulfotransferase that transfers sulfate from 3'-phosphoadenosine 5'-phosphosulfate (PAPS) to the C-6 hydroxyl group of the GalNAc 4-sulfate residue of chondroitin sulfate A and forms chondroitin sulfate E containing GlcA-GalNAc(4,6-SO(4)) repeating units. It also transfers sulfate to a unique non-reducing terminal sequence, GalNAc(4SO4)-GlcA(2SO4)-GalNAc(6SO4), to yield a highly sulfated structure similar to the structure found in thrombomodulin chondroitin sulfate. May also act as a B-cell receptor involved in BCR ligation-mediated early activation that mediate regulatory signals key to B-cell development and/or regulation of B-cell-specific RAG expression; however such results are unclear in vivo. The protein is Carbohydrate sulfotransferase 15 (CHST15) of Homo sapiens (Human).